Reading from the N-terminus, the 401-residue chain is Acetate kinase (401 aa).

A Mg(2+)-binding site is contributed by asparagine 9. Lysine 16 serves as a coordination point for ATP. Arginine 88 is a substrate binding site. Aspartate 147 (proton donor/acceptor) is an active-site residue. ATP-binding positions include 207–211 (HLGNG), 282–284 (DCR), and 333–337 (GIGEN). Glutamate 388 contacts Mg(2+).

This sequence belongs to the acetokinase family. As to quaternary structure, homodimer. Requires Mg(2+) as cofactor. The cofactor is Mn(2+).

It is found in the cytoplasm. It carries out the reaction acetate + ATP = acetyl phosphate + ADP. The protein operates within metabolic intermediate biosynthesis; acetyl-CoA biosynthesis; acetyl-CoA from acetate: step 1/2. In terms of biological role, catalyzes the formation of acetyl phosphate from acetate and ATP. Can also catalyze the reverse reaction. This chain is Acetate kinase, found in Haemophilus influenzae (strain 86-028NP).